A 306-amino-acid chain; its full sequence is Agmatinase (306 aa).

Positions 126, 149, 151, 153, 230, and 232 each coordinate Mn(2+).

This sequence belongs to the arginase family. Agmatinase subfamily. It depends on Mn(2+) as a cofactor.

It catalyses the reaction agmatine + H2O = urea + putrescine. Its pathway is amine and polyamine biosynthesis; putrescine biosynthesis via agmatine pathway; putrescine from agmatine: step 1/1. In terms of biological role, catalyzes the formation of putrescine from agmatine. The sequence is that of Agmatinase from Klebsiella pneumoniae (strain 342).